Reading from the N-terminus, the 416-residue chain is Venom allergen 5 (416 aa).

The signal sequence occupies residues 1-24 (MKGILLLFLKLVVLFVYLCSSVLS). The 161-residue stretch at 57-217 (DDRNTIINLH…NYGPAGNLDD (161 aa)) folds into the SCP domain. Arginine 82 is subject to Arginine amide; in Cryptide Pep-4.

It belongs to the CRISP family. Venom allergen 5-like subfamily. Post-translationally, contains 9 disulfide bonds. As to expression, expressed by the venom gland.

Its subcellular location is the secreted. Its function is as follows. Presents weak lactate dehydrogenase (LDH) release from mast cells. Does not induce hemolytic activity, mast cell degranulation, and antimicrobial effects. In vivo, injection into mice causes moderate edema formation, but induces very weak or no change in nociceptive sensibility. It also causes an alteration in rearing (standing on hind limbs), but does not impact locomotion. The chain is Venom allergen 5 from Tityus serrulatus (Brazilian scorpion).